Reading from the N-terminus, the 284-residue chain is 2-dehydro-3-deoxyphosphooctonate aldolase (284 aa).

Belongs to the KdsA family.

Its subcellular location is the cytoplasm. It carries out the reaction D-arabinose 5-phosphate + phosphoenolpyruvate + H2O = 3-deoxy-alpha-D-manno-2-octulosonate-8-phosphate + phosphate. It functions in the pathway carbohydrate biosynthesis; 3-deoxy-D-manno-octulosonate biosynthesis; 3-deoxy-D-manno-octulosonate from D-ribulose 5-phosphate: step 2/3. The protein operates within bacterial outer membrane biogenesis; lipopolysaccharide biosynthesis. The sequence is that of 2-dehydro-3-deoxyphosphooctonate aldolase from Synechococcus sp. (strain ATCC 27144 / PCC 6301 / SAUG 1402/1) (Anacystis nidulans).